The chain runs to 189 residues: MAQERRPQRDDRQSREERDSEFVDKLVAINRVAKVVKGGRRFGFAALVVVGDQKGRVGFGHGKAREVPEAIRKATEAAKRELIFVPLRDGRTLHHDVHGRHGAGKVLLRSAKVGTGIIAGGPMRAVFETLGMHDVVAKSTGSSNPYNMVRATFDALKHQVHPKDIAAQRGIKYATLQARRSASGNASEE.

Residues 22–85 (FVDKLVAINR…EAAKRELIFV (64 aa)) form the S5 DRBM domain.

Belongs to the universal ribosomal protein uS5 family. In terms of assembly, part of the 30S ribosomal subunit. Contacts proteins S4 and S8.

In terms of biological role, with S4 and S12 plays an important role in translational accuracy. Functionally, located at the back of the 30S subunit body where it stabilizes the conformation of the head with respect to the body. The sequence is that of Small ribosomal subunit protein uS5 from Rhizobium johnstonii (strain DSM 114642 / LMG 32736 / 3841) (Rhizobium leguminosarum bv. viciae).